The chain runs to 210 residues: Orotate phosphoribosyltransferase (210 aa).

Residues Arg97, Lys98, and 125 to 133 each bind 5-phospho-alpha-D-ribose 1-diphosphate; that span reads NDMVSSGKS. Orotate contacts are provided by Ser129 and Arg157.

Belongs to the purine/pyrimidine phosphoribosyltransferase family. PyrE subfamily. In terms of assembly, homodimer. Mg(2+) serves as cofactor.

It catalyses the reaction orotidine 5'-phosphate + diphosphate = orotate + 5-phospho-alpha-D-ribose 1-diphosphate. It functions in the pathway pyrimidine metabolism; UMP biosynthesis via de novo pathway; UMP from orotate: step 1/2. In terms of biological role, catalyzes the transfer of a ribosyl phosphate group from 5-phosphoribose 1-diphosphate to orotate, leading to the formation of orotidine monophosphate (OMP). The polypeptide is Orotate phosphoribosyltransferase (Chlamydia pneumoniae (Chlamydophila pneumoniae)).